Here is a 101-residue protein sequence, read N- to C-terminus: DGIWTQLIFTLVKNLATLWQSGDFQFLDHECHYRIKPTFRRLKWKYKGKFWCPSWTSITGRATKSSRSGAVEHSVRNFVGQAKSSGLITQRQAEQFISQYN.

Cys31 and Cys52 are joined by a disulfide.

Binds tightly to LPS and thus specifically inhibits the LPS-mediated activation of the hemolymph coagulation. It has a strong antibacterial effect especially on the growth of Gram-negative bacteria. The sequence is that of Anti-lipopolysaccharide factor from Limulus polyphemus (Atlantic horseshoe crab).